Here is a 430-residue protein sequence, read N- to C-terminus: tRNA(Ile)-lysidine synthase (430 aa).

An ATP-binding site is contributed by 21–26 (SGGLDS).

This sequence belongs to the tRNA(Ile)-lysidine synthase family.

It is found in the cytoplasm. It carries out the reaction cytidine(34) in tRNA(Ile2) + L-lysine + ATP = lysidine(34) in tRNA(Ile2) + AMP + diphosphate + H(+). Ligates lysine onto the cytidine present at position 34 of the AUA codon-specific tRNA(Ile) that contains the anticodon CAU, in an ATP-dependent manner. Cytidine is converted to lysidine, thus changing the amino acid specificity of the tRNA from methionine to isoleucine. This is tRNA(Ile)-lysidine synthase from Salmonella paratyphi B (strain ATCC BAA-1250 / SPB7).